The sequence spans 228 residues: uncharacterized protein (228 aa).

The N-terminal stretch at 1-16 (MILLLLALISATTAFQ) is a signal peptide. A helical transmembrane segment spans residues 206–225 (LFQTLFFVTLSFLVGSAFAL).

The protein to A.fulgidus AF_1225.

It localises to the membrane. This is an uncharacterized protein from Archaeoglobus fulgidus (strain ATCC 49558 / DSM 4304 / JCM 9628 / NBRC 100126 / VC-16).